Consider the following 296-residue polypeptide: Class E basic helix-loop-helix protein 22 (296 aa).

Positions 26-70 (SAFRPPQGLDLSQPGDRSPLHCYDGPDPSDLLRHHQHHHQASSGA) are disordered. The bHLH domain maps to 153 to 207 (TLRLNINARERRRMHDLNDALDELRAVIPYAHSPSVRKLSKIATLLLAKNYILMQ).

The protein resides in the nucleus. In terms of biological role, may act as a transcriptional repressor. This is Class E basic helix-loop-helix protein 22 (bhlhe22) from Xenopus tropicalis (Western clawed frog).